The chain runs to 250 residues: 5-oxoprolinase subunit A (250 aa).

The protein belongs to the LamB/PxpA family. As to quaternary structure, forms a complex composed of PxpA, PxpB and PxpC.

The enzyme catalyses 5-oxo-L-proline + ATP + 2 H2O = L-glutamate + ADP + phosphate + H(+). In terms of biological role, catalyzes the cleavage of 5-oxoproline to form L-glutamate coupled to the hydrolysis of ATP to ADP and inorganic phosphate. This chain is 5-oxoprolinase subunit A, found in Chromohalobacter salexigens (strain ATCC BAA-138 / DSM 3043 / CIP 106854 / NCIMB 13768 / 1H11).